A 457-amino-acid polypeptide reads, in one-letter code: 3-isopropylmalate dehydratase large subunit (457 aa).

C337, C397, and C400 together coordinate [4Fe-4S] cluster.

Belongs to the aconitase/IPM isomerase family. LeuC type 1 subfamily. As to quaternary structure, heterodimer of LeuC and LeuD. Requires [4Fe-4S] cluster as cofactor.

It catalyses the reaction (2R,3S)-3-isopropylmalate = (2S)-2-isopropylmalate. It functions in the pathway amino-acid biosynthesis; L-leucine biosynthesis; L-leucine from 3-methyl-2-oxobutanoate: step 2/4. Functionally, catalyzes the isomerization between 2-isopropylmalate and 3-isopropylmalate, via the formation of 2-isopropylmaleate. This chain is 3-isopropylmalate dehydratase large subunit, found in Oenococcus oeni (strain ATCC BAA-331 / PSU-1).